The chain runs to 305 residues: GMP synthase [glutamine-hydrolyzing] subunit B (305 aa).

In terms of domain architecture, GMPS ATP-PPase spans 2 to 185; that stretch reads VDVDSFVEDA…LGLEEIISER (184 aa). Residue 29-35 coordinates ATP; it reads SGGVDSS.

As to quaternary structure, heterodimer composed of a glutamine amidotransferase subunit (A) and a GMP-binding subunit (B).

The enzyme catalyses XMP + L-glutamine + ATP + H2O = GMP + L-glutamate + AMP + diphosphate + 2 H(+). The protein operates within purine metabolism; GMP biosynthesis; GMP from XMP (L-Gln route): step 1/1. Functionally, catalyzes the synthesis of GMP from XMP. The protein is GMP synthase [glutamine-hydrolyzing] subunit B of Halobacterium salinarum (strain ATCC 29341 / DSM 671 / R1).